Here is a 166-residue protein sequence, read N- to C-terminus: MAAATSLSFFHSTLASSSSSSVQQLSLPPKFVNFRPQTLPLIQAKAHTRREDRTARHVRIRKKVEGTPERPRLCVFRSNKHLYVQVIDDTKMHTLAAASTMQKAISENIDYSAGPTVEVAQKIGEMIAKSCLEKGITKVAFDRGGYPYHGRVKALADAAREHGLVF.

The transit peptide at 1 to 44 directs the protein to the chloroplast; it reads MAAATSLSFFHSTLASSSSSSVQQLSLPPKFVNFRPQTLPLIQA.

The protein belongs to the universal ribosomal protein uL18 family. In terms of assembly, component of the chloroplast large ribosomal subunit (LSU). Mature 70S chloroplast ribosomes of higher plants consist of a small (30S) and a large (50S) subunit. The 30S small subunit contains 1 molecule of ribosomal RNA (16S rRNA) and 24 different proteins. The 50S large subunit contains 3 rRNA molecules (23S, 5S and 4.5S rRNA) and 33 different proteins.

The protein localises to the plastid. It is found in the chloroplast. Functionally, component of the chloroplast ribosome (chloro-ribosome), a dedicated translation machinery responsible for the synthesis of chloroplast genome-encoded proteins, including proteins of the transcription and translation machinery and components of the photosynthetic apparatus. The sequence is that of Large ribosomal subunit protein uL18c (RPL18) from Spinacia oleracea (Spinach).